The chain runs to 3122 residues: MIPAALPHPTMKRQGDRDIVVTGVRNQFATDLEPGGSVSCMRSSLSFLSLLFDVGPRDVLSAEAIEGCLVEGGEWTRAAAGSGPPRMCSIIELPNFLEYPAARGGLRCVFSRVYGEVGFFGEPTAGLLETQCPAHTFFAGPWAMRPLSYTLLTIGPLGMGLYRDGDTAYLFDPHGLPAGTPAFIAKVRAGDVYPYLTYYAHDRPKVRWAGAMVFFVPSGPGAVAPADLTAAALHLYGASETYLQDEPFVERRVAITHPLRGEIGGLGALFVGVVPRGDGEGSGPVVPALPAPTHVQTPGADRPPEAPRGASGPPDTPQAGHPNRPPDDVWAAALEGTPPAKPSAPDAAASGPPHAAPPPQTPAGDAAEEAEDLRVLEVGAVPVGRHRARYSTGLPKRRRPTWTPPSSVEDLTSGERPAPKAPPAKAKKKSAPKKKAPVAAEVPASSPTPIAATVPPAPDTPPQSGQGGGDDGPASPSSPSVLETLGARRPPEPPGADLAQLFEVHPNVAATAVRLAARDAALAREVAACSQLTINALRSPYPAHPGLLELCVIFFFERVLAFLIENGARTHTQAGVAGPAAALLDFTLRMLPRKTAVGDFLASTRMSLADVAAHRPLIQHVLDENSQIGRLALAKLVLVARDVIRETDAFYGDLADLDLQLRAAPPANLYARLGEWLLERSRAHPNTLFAPATPTHPEPLLHRIQALAQFARGEEMRVEAEAREMREALDALARGVDSVSQRAGPLTVMPVPAAPGAGGRAPCPPALGPEAIQARLEDVRIQARRAIESAVKEYFHRGAVYSAKALQASDSHDCRFHVASAAVVPMVQLLESLPAFDQHTRDVAQRAALPPPPPLATSPQAILLRDLLQRGQPLDAPEDLAAWLSVLTDAATQGLIERKPLEELARSIHGINDQQARRSSGLAELQRFDALDAALAQQLDSDAAFVPATGPAPYVDGGGLSPEATRMAEDALRQARAMEAAKMTAELAPEARSRLRERAHALEAMLNDARERAKVAHDAREKFLHKLQGVLRPLPDFVGLKACPAVLATLRASLPAGWTDLADAVRGPPPEVTAALRADLWGLLGQYREALEHPTPDTATALAGLHPAFVVVLKTLFADAPETPVLVQFFSDHAPTIAKAVSNAINAGSAAVATASPAATVDAAVRAHGALADAVSALGAAARDPASPLSFLAVLADSAAGYVKATRLALEARGAIDELTTLGSAAADLVVQARRACAQPEGDHAALIDAAARATTAARESLAGHEAGFGGLLHAEGTAGDHSPSGRALQELGKVIGATRRRADELEAAVADLTAKMAAQRARGSSERWAAGVEAALDRVENRAEFDVVELRRLQALAGTHGYNPRDFRKRAEQALAANAEAVTLALDTAFAFNPYTPENQRHPMLPPLAAIHRLGWSAAFHAAAETYADMFRVDAEPLARLLRIAEGLLEMAQAGDGFIDYHEAVGRLADDMTSVPGLRRYVPFFQHGYADYVELRDRLDAIRADVHRALGGVPLDLAAAAEQISAARNDPEATAELVRTGVTLPCPSEDALVACAAALERVDQSPVKNTAYAEYVAFVTRQDTAETKDAVVRAKQQRAEATERVMAGLREALAARERRAQIEAEGLANLKTMLKVVAVPATVAKTLDQARSVAEIADQVEVLLDQTEKTRELDVPAVIWLEHAQRTFETHPLSAARGDGPGPLARHAGRLGALFDTRRRVDALRRSLEEAEAEWDEVWGRFGRVRGGAWKSPEGFRAMHEQLRALQDTTNTVSGLRAQPAYERLSARYQGVLGAKGAERAEAVEELGARVTKHTALCARLRDEVVRRVPWEMNFDALGGLLAEFDAAAADLAPWAVEEFRGARELIQYRMGLYSAYARAGGQTGAGAESAPAPLLVDLRALDARARASSSPEGHEVDPQLLRRRGEAYLRAGGDPGPLVLREAVSALDLPFATSFLAPDGTPLQYALCFPAVTDKLGALLMRPEAACVRPPLPTDVLESAPTVTAMYVLTVVNRLQLALSDAQAANFQLFGRFVRHRQATWGASMDAAAELYVALVATTLTREFGCRWAQLGWASGAAAPRPPPGPRGSQRHCVAFNENDVLVALVAGVPEHIYNFWRLDLVRQHEYMHLTLERAFEDAAESMLFVQRLTPHPDARIRVLPTFLDGGPPTRGLLFGTRLADWRRGKLSETDPLAPWRSALELGTQRRDVPALGKLSPAQALAAVSVLGRMCLPSAALAALWTCMFPDDYTEYDSFDALLAARLESGQTLGPAGGREASLPEAPHALYRPTGQHVAVLAAATHRTPAARVTAMDLVLAAVLLGAPVVVALRNTTAFSRESELELCLTLFDSRPGGPDAALRDVVSSDIETWAVGLLHTDLNPIENACLAAQLPRLSALIAERPLADGPPCLVLVDISMTPVAVLWEAPEPPGPPDVRFVGSEATEELPFVATAGDVLAASAADADPFFARAILGRPFDASLLTGELFPGHPVYQRPLADEAGPSAPTAARDPRDLAGGDGGSGPEDPAAPPARQADPGVLAPTLLTDATTGEPVPPRMWAWIHGLEELASDDAGGPTPNPAPALLPPPATDQSVPTSQYAPRPIGPAATARETRPSVPPQQNTGRVPVAPRDDPRPSPPTPSPPADAALPPPAFSGSAAAFSAAVPRVRRSRRTRAKSRAPRASAPPEGWRPPALPAPVAPVAASARPPDQPPTPESAPPAWVSALPLPPGPASARGAFPAPTLAPIPPPPAEGAVVPGGDRRRGRRQTTAGPSPTPPRGPAAGPPRRLTRPAVASLSASLNSLPSPRDPADHAAAVSAAAAAVPPSPGLAPPTSAVQTSPPPLAPGPVAPSEPLCGWVVPGGPVARRPPPQSPATKPAARTRIRARSVPQPPLPQPPLPQPPLPQPPLPQPPLPQPPLPQPPLPQPPLPQPPLPQPPLPQPPLPPVTRTLTPQSRDSVPTPESPTHTNTHLPVSAVTSWASSLALHVDSAPPPASLLQTLHISSDDEHSDADSLRFSDSDDTEALDPLPPEPHLPPADEPPGPLAADHLQSPHSQFGPLPVQANAVLSRRYVRSTGRSALAVLIRACRRIQQQLQRTRRALFQRSNAVLTSLHHVRMLLG.

The segment at 1–248 (MIPAALPHPT…SETYLQDEPF (248 aa)) is deubiquitination activity. The Peptidase C76 domain occupies 20 to 238 (VVTGVRNQFA…TAAALHLYGA (219 aa)). Residues Cys40, Asp172, and His174 contribute to the active site. 2 disordered regions span residues 281 to 367 (GSGP…GDAA) and 387 to 496 (RARY…PPGA). Positions 343-353 (SAPDAAASGPP) are enriched in low complexity. Basic residues-rich tracts occupy residues 387 to 400 (RARY…RRRP) and 425 to 436 (KAKKKSAPKKKA). The span at 437–454 (PVAAEVPASSPTPIAATV) shows a compositional bias: low complexity. Positions 548–578 (LELCVIFFFERVLAFLIENGARTHTQAGVAG) are interaction with inner tegument protein. Disordered regions lie at residues 2494-2539 (YQRP…ADPG), 2570-2974 (ASDD…THLP), and 3006-3059 (SDDE…SQFG). 2 stretches are compositionally biased toward pro residues: residues 2578–2590 (TPNP…PPPA) and 2637–2654 (PSPP…PPPA). Residues 2655–2667 (FSGSAAAFSAAVP) show a composition bias toward low complexity. Over residues 2668–2681 (RVRRSRRTRAKSRA) the composition is skewed to basic residues. 2 stretches are compositionally biased toward pro residues: residues 2690–2700 (GWRPPALPAPV) and 2710–2719 (PDQPPTPESA). A compositionally biased stretch (low complexity) spans 2734-2743 (ASARGAFPAP). 2 stretches are compositionally biased toward pro residues: residues 2744–2753 (TLAPIPPPPA) and 2775–2785 (SPTPPRGPAAG). 2 stretches are compositionally biased toward low complexity: residues 2786-2807 (PPRR…SLPS) and 2814-2825 (HAAAVSAAAAAV). Positions 2841–2852 (SPPPLAPGPVAP) are enriched in pro residues. The span at 2853–2867 (SEPLCGWVVPGGPVA) shows a compositional bias: low complexity. 11 repeat units span residues 2891-2895 (PQPPL), 2896-2900 (PQPPL), 2901-2905 (PQPPL), 2906-2910 (PQPPL), 2911-2915 (PQPPL), 2916-2920 (PQPPL), 2921-2925 (PQPPL), 2926-2930 (PQPPL), 2931-2935 (PQPPL), 2936-2940 (PQPPL), and 2941-2945 (PQPPL). Positions 2891 to 2945 (PQPPLPQPPLPQPPLPQPPLPQPPLPQPPLPQPPLPQPPLPQPPLPQPPLPQPPL) are 11 X 5 AA tandem repeats of P-Q-P-P-L. Positions 2891 to 2947 (PQPPLPQPPLPQPPLPQPPLPQPPLPQPPLPQPPLPQPPLPQPPLPQPPLPQPPLPP) are enriched in pro residues. 2 stretches are compositionally biased toward polar residues: residues 2950-2959 (RTLTPQSRDS) and 2965-2974 (SPTHTNTHLP). Basic and acidic residues predominate over residues 3006–3020 (SDDEHSDADSLRFSD). The segment covering 3029 to 3045 (PLPPEPHLPPADEPPGP) has biased composition (pro residues).

It belongs to the herpesviridae large tegument protein family. As to quaternary structure, interacts with host CUL1 and CUL4A; these interactions inhibit the E3 ligase activity of cullins. Interacts with inner tegument protein. Interacts with capsid vertex specific component CVC2. Interacts with the major capsid protein/MCP. Post-translationally, proteolytically processed, possibly into several polypeptides. Enzymatic activity is only detectable following cleavage of the UL36 protein, which occurs late during viral replication.

The protein resides in the virion tegument. It is found in the host cytoplasm. Its subcellular location is the host nucleus. It carries out the reaction Thiol-dependent hydrolysis of ester, thioester, amide, peptide and isopeptide bonds formed by the C-terminal Gly of ubiquitin (a 76-residue protein attached to proteins as an intracellular targeting signal).. Functionally, large tegument protein that plays multiple roles in the viral cycle. During viral entry, remains associated with the capsid while most of the tegument is detached and participates in the capsid transport toward the host nucleus. Plays a role in the routing of the capsid at the nuclear pore complex and subsequent uncoating. Within the host nucleus, acts as a deneddylase and promotes the degradation of nuclear CRLs (cullin-RING ubiquitin ligases) and thereby stabilizes nuclear CRL substrates, while cytoplasmic CRLs remain unaffected. These modifications prevent host cell cycle S-phase progression and create a favorable environment allowing efficient viral genome replication. Participates later in the secondary envelopment of capsids. Indeed, plays a linker role for the association of the outer viral tegument to the capsids together with the inner tegument protein. This is Large tegument protein deneddylase from Human herpesvirus 2 (strain HG52) (HHV-2).